Consider the following 456-residue polypeptide: Serine/threonine-protein kinase PBS1 (456 aa).

A disordered region spans residues 1–57; that stretch reads MGCFSCFDSSDDEKLNPVDESNHGQKKQSQPTVSNNISGLPSGGEKLSSKTNGGSKR. Gly2 is lipidated: N-myristoyl glycine. 2 S-palmitoyl cysteine lipidation sites follow: Cys3 and Cys6. A compositionally biased stretch (basic and acidic residues) spans 12 to 23; it reads DEKLNPVDESNH. Ser21 bears the Phosphoserine mark. Over residues 27-39 the composition is skewed to polar residues; the sequence is KQSQPTVSNNISG. Positions 86 to 363 constitute a Protein kinase domain; it reads FHPDTFLGEG…ADVVTALSYL (278 aa). Residues 92–100 and Lys115 each bind ATP; that span reads LGEGGFGRV. Tyr160 carries the phosphotyrosine modification. Residue Asp213 is the Proton acceptor of the active site. Ser217 and Ser247 each carry phosphoserine. A phosphothreonine mark is found at Thr248 and Thr253. Position 261 is a phosphotyrosine (Tyr261). The Recognition motif required for RPS5-mediated plant resistance to P.syringae motif lies at 292–296; that stretch reads SEMPH. The disordered stretch occupies residues 368-456; that stretch reads YDPSKDDSRR…QGTSESNSTG (89 aa). Basic and acidic residues-rich tracts occupy residues 370–392 and 400–429; these read PSKD…RNDD and FDLE…RAVA. A compositionally biased stretch (polar residues) spans 446 to 456; the sequence is EQGTSESNSTG.

It belongs to the protein kinase superfamily. Ser/Thr protein kinase family. In terms of assembly, in infected plant cells, it interacts with the P.syringae virulence protein avrPphB. In uninfected plants, autophosphorylated form interacts with RPS5. Interacts with FLS2. Cleaved by avrPphB in infected plant cells. Its cleavage serves as a signal that triggers the RPS5-mediated defense system. In terms of processing, autophosphorylates. Autophosphorylation may be required to trigger the RPS5-mediated plant defense system. Post-translationally, palmitoylation at Cys-3 and Cys-6 are required for plasma membrane location that is essential for the RPS5-mediated plant defense response.

The protein resides in the cell membrane. The enzyme catalyses L-seryl-[protein] + ATP = O-phospho-L-seryl-[protein] + ADP + H(+). It catalyses the reaction L-threonyl-[protein] + ATP = O-phospho-L-threonyl-[protein] + ADP + H(+). Protein kinase required for plant defense mechanism mediated by the disease resistance (R) protein RPS5. In case of infection by Pseudomonas syringae, AvrPphB triggers RPS5-mediated defense mechanism via the cleavage of PBS1. Both kinase activity and cleavage by avrPphB are independently required to trigger the RPS5-mediated resistance. Contributes to PAMP-triggered immunity (PTI) signaling and defense responses downstream of FLS2. This is Serine/threonine-protein kinase PBS1 from Arabidopsis thaliana (Mouse-ear cress).